We begin with the raw amino-acid sequence, 89 residues long: OMEGA-ectatommitoxin(02)-Rm1b (89 aa).

The signal sequence occupies residues 1 to 30 (MKDSYISIVIAYLMVTFILVSSMPIEGEKG). Disulfide bonds link C39–C52, C47–C68, and C70–C79. The EGF-like domain maps to 43 to 80 (YANYCFNGKCVHFVAQDEPGKPCYSCICDKFYIGKRCG).

Belongs to the EGF domain peptide family. In terms of tissue distribution, expressed by the venom gland.

The protein localises to the secreted. Functionally, ant peptide with probable defensive activity which acts as a potent agonist of the mammalian epidermal growth factor receptor (EGFR). Mimics, both structurally and functionally, vertebrate epidermal growth factor (EGF) peptide hormones. In vivo, intraplantar injection in mice causes long-lasting (several days) hypersensitivity of the injected paw to both mechanical and thermal stimuli. Its long-lasting effect is unusual for venom toxins whose effects are usually immediate. One possible explanation is that it would reduce the duration of a nest attack, discourage future attacks, or enhance the actions of subsequent exposure to other pain-inducing venom peptides. The sequence is that of OMEGA-ectatommitoxin(02)-Rm1b from Rhytidoponera metallica (Australian green-headed ant).